The sequence spans 309 residues: Hydroxyacylglutathione hydrolase, mitochondrial (309 aa).

The N-terminal 24 residues, 1–24, are a transit peptide targeting the mitochondrion; sequence MVLGRGSLCLRSLSVLGAACARRG. Lysine 90 carries the post-translational modification N6-acetyllysine. Positions 103, 105, 107, and 108 each coordinate Zn(2+). An N6-acetyllysine modification is found at lysine 117. Zn(2+) contacts are provided by histidine 159 and aspartate 183. Substrate-binding positions include 192–194 and 222–224; these read KFY and HEY. Histidine 222 provides a ligand contact to Zn(2+). Lysine 230 is subject to N6-acetyllysine; alternate. Lysine 230 carries the post-translational modification N6-succinyllysine; alternate. 298-301 is a substrate binding site; sequence RREK.

This sequence belongs to the metallo-beta-lactamase superfamily. Glyoxalase II family. As to quaternary structure, monomer. Zn(2+) is required as a cofactor. As to expression, strongly expressed in testis, skeletal muscle and heart. Weakly expressed in placenta, pancreas, spleen and peripheral blood leukocytes.

It localises to the mitochondrion matrix. It is found in the cytoplasm. It carries out the reaction an S-(2-hydroxyacyl)glutathione + H2O = a 2-hydroxy carboxylate + glutathione + H(+). The enzyme catalyses (R)-S-lactoylglutathione + H2O = (R)-lactate + glutathione + H(+). It functions in the pathway secondary metabolite metabolism; methylglyoxal degradation; (R)-lactate from methylglyoxal: step 2/2. Functionally, thiolesterase that catalyzes the hydrolysis of S-D-lactoyl-glutathione to form glutathione and D-lactic acid. The protein is Hydroxyacylglutathione hydrolase, mitochondrial (Hagh) of Rattus norvegicus (Rat).